Consider the following 405-residue polypeptide: Aspartic protease (405 aa).

The signal sequence occupies residues 1 to 21 (MISDTVIAILAVALVGSTVQA). A propeptide spans 22–81 (APVDATATSTSGIIAVPISKSAAQLAREADPVVSLDWLKKTKAQAQYKHKQANARLHSKR) (removed in mature form). The 306-residue stretch at 97 to 402 (WTGPITIGGQ…DVGNARVGFA (306 aa)) folds into the Peptidase A1 domain. Asp113 is an active-site residue. Cys126 and Cys131 form a disulfide bridge. The active site involves Asp290. The cysteines at positions 332 and 366 are disulfide-linked.

Belongs to the peptidase A1 family.

It localises to the secreted. Its activity is regulated as follows. Inhibited by pepstatin A. In terms of biological role, possesses acidic protease activity. Hydrolyzes casein and azoalbumin in vitro. In Phaffia rhodozyma (Yeast), this protein is Aspartic protease.